The chain runs to 175 residues: Thioredoxin M3, chloroplastic (175 aa).

A chloroplast-targeting transit peptide spans 1 to 59; sequence MAATATACPAPPPPRSLYRGVALAAPGRRRAGYGASSSAARRWPGCRRRWAAHRIRTVS. The region spanning 61–171 is the Thioredoxin domain; it reads AYSPRGAKTI…YVRAIEKSIS (111 aa). Active-site nucleophile residues include Cys-95 and Cys-98. Cys-95 and Cys-98 are oxidised to a cystine.

It belongs to the thioredoxin family. Plant M-type subfamily.

Its subcellular location is the plastid. It localises to the chloroplast. Its function is as follows. Probable thiol-disulfide oxidoreductase that may be involved in the redox regulation of chloroplastic enzymes. In Oryza sativa subsp. japonica (Rice), this protein is Thioredoxin M3, chloroplastic.